Reading from the N-terminus, the 152-residue chain is Xanthine-guanine phosphoribosyltransferase (152 aa).

Residues 37–38, arginine 69, and 88–96 each bind 5-phospho-alpha-D-ribose 1-diphosphate; these read RG and DDLVDTGVT. Position 69 (arginine 69) interacts with GMP. Aspartate 89 serves as a coordination point for Mg(2+). Aspartate 92 and isoleucine 135 together coordinate guanine. The xanthine site is built by aspartate 92 and isoleucine 135. GMP is bound by residues 92-96 and 134-135; these read DTGVT and WI.

Belongs to the purine/pyrimidine phosphoribosyltransferase family. XGPT subfamily. Homotetramer. Mg(2+) is required as a cofactor.

Its subcellular location is the cell inner membrane. The catalysed reaction is GMP + diphosphate = guanine + 5-phospho-alpha-D-ribose 1-diphosphate. It carries out the reaction XMP + diphosphate = xanthine + 5-phospho-alpha-D-ribose 1-diphosphate. It catalyses the reaction IMP + diphosphate = hypoxanthine + 5-phospho-alpha-D-ribose 1-diphosphate. It participates in purine metabolism; GMP biosynthesis via salvage pathway; GMP from guanine: step 1/1. The protein operates within purine metabolism; XMP biosynthesis via salvage pathway; XMP from xanthine: step 1/1. In terms of biological role, purine salvage pathway enzyme that catalyzes the transfer of the ribosyl-5-phosphate group from 5-phospho-alpha-D-ribose 1-diphosphate (PRPP) to the N9 position of the 6-oxopurines guanine and xanthine to form the corresponding ribonucleotides GMP (guanosine 5'-monophosphate) and XMP (xanthosine 5'-monophosphate), with the release of PPi. To a lesser extent, also acts on hypoxanthine. This chain is Xanthine-guanine phosphoribosyltransferase, found in Sodalis glossinidius (strain morsitans).